The chain runs to 359 residues: Holliday junction branch migration complex subunit RuvB (359 aa).

A large ATPase domain (RuvB-L) region spans residues 1-187 (MSGLEHGDAS…FGFTAHLEFY (187 aa)). Residues L26, R27, G68, K71, T72, T73, 134 to 136 (EDY), R177, Y187, and R224 each bind ATP. T72 contacts Mg(2+). Positions 188–257 (ETHELEQVIE…SVRAALDLYD (70 aa)) are small ATPAse domain (RuvB-S). Residues 260–359 (PLGLDRLDRA…VAGALFGDEL (100 aa)) are head domain (RuvB-H). DNA contacts are provided by R315 and R320.

It belongs to the RuvB family. As to quaternary structure, homohexamer. Forms an RuvA(8)-RuvB(12)-Holliday junction (HJ) complex. HJ DNA is sandwiched between 2 RuvA tetramers; dsDNA enters through RuvA and exits via RuvB. An RuvB hexamer assembles on each DNA strand where it exits the tetramer. Each RuvB hexamer is contacted by two RuvA subunits (via domain III) on 2 adjacent RuvB subunits; this complex drives branch migration. In the full resolvosome a probable DNA-RuvA(4)-RuvB(12)-RuvC(2) complex forms which resolves the HJ.

The protein localises to the cytoplasm. The catalysed reaction is ATP + H2O = ADP + phosphate + H(+). Functionally, the RuvA-RuvB-RuvC complex processes Holliday junction (HJ) DNA during genetic recombination and DNA repair, while the RuvA-RuvB complex plays an important role in the rescue of blocked DNA replication forks via replication fork reversal (RFR). RuvA specifically binds to HJ cruciform DNA, conferring on it an open structure. The RuvB hexamer acts as an ATP-dependent pump, pulling dsDNA into and through the RuvAB complex. RuvB forms 2 homohexamers on either side of HJ DNA bound by 1 or 2 RuvA tetramers; 4 subunits per hexamer contact DNA at a time. Coordinated motions by a converter formed by DNA-disengaged RuvB subunits stimulates ATP hydrolysis and nucleotide exchange. Immobilization of the converter enables RuvB to convert the ATP-contained energy into a lever motion, pulling 2 nucleotides of DNA out of the RuvA tetramer per ATP hydrolyzed, thus driving DNA branch migration. The RuvB motors rotate together with the DNA substrate, which together with the progressing nucleotide cycle form the mechanistic basis for DNA recombination by continuous HJ branch migration. Branch migration allows RuvC to scan DNA until it finds its consensus sequence, where it cleaves and resolves cruciform DNA. The sequence is that of Holliday junction branch migration complex subunit RuvB from Clavibacter michiganensis subsp. michiganensis (strain NCPPB 382).